A 363-amino-acid chain; its full sequence is UDP-N-acetylglucosamine--N-acetylmuramyl-(pentapeptide) pyrophosphoryl-undecaprenol N-acetylglucosamine transferase (363 aa).

Residues 14–16 (TGG), N122, R163, S190, and Q285 each bind UDP-N-acetyl-alpha-D-glucosamine.

The protein belongs to the glycosyltransferase 28 family. MurG subfamily.

The protein resides in the cell inner membrane. The catalysed reaction is di-trans,octa-cis-undecaprenyl diphospho-N-acetyl-alpha-D-muramoyl-L-alanyl-D-glutamyl-meso-2,6-diaminopimeloyl-D-alanyl-D-alanine + UDP-N-acetyl-alpha-D-glucosamine = di-trans,octa-cis-undecaprenyl diphospho-[N-acetyl-alpha-D-glucosaminyl-(1-&gt;4)]-N-acetyl-alpha-D-muramoyl-L-alanyl-D-glutamyl-meso-2,6-diaminopimeloyl-D-alanyl-D-alanine + UDP + H(+). Its pathway is cell wall biogenesis; peptidoglycan biosynthesis. Its function is as follows. Cell wall formation. Catalyzes the transfer of a GlcNAc subunit on undecaprenyl-pyrophosphoryl-MurNAc-pentapeptide (lipid intermediate I) to form undecaprenyl-pyrophosphoryl-MurNAc-(pentapeptide)GlcNAc (lipid intermediate II). This chain is UDP-N-acetylglucosamine--N-acetylmuramyl-(pentapeptide) pyrophosphoryl-undecaprenol N-acetylglucosamine transferase, found in Prochlorococcus marinus (strain MIT 9301).